We begin with the raw amino-acid sequence, 513 residues long: Tryptophan--tRNA ligase 1 (513 aa).

A 'HIGH' region motif is present at residues 86–94; it reads PTGDPHIGH. The 'KMSKS' region signature appears at 393-397; sequence KMSSS.

This sequence belongs to the class-I aminoacyl-tRNA synthetase family.

It localises to the cytoplasm. It catalyses the reaction tRNA(Trp) + L-tryptophan + ATP = L-tryptophyl-tRNA(Trp) + AMP + diphosphate + H(+). The protein is Tryptophan--tRNA ligase 1 of Halobacterium salinarum (strain ATCC 700922 / JCM 11081 / NRC-1) (Halobacterium halobium).